A 420-amino-acid polypeptide reads, in one-letter code: L-rhamnose isomerase (420 aa).

Mn(2+) is bound by residues histidine 262, aspartate 294, and aspartate 296.

Belongs to the rhamnose isomerase family. Homotetramer. The cofactor is Mn(2+).

It is found in the cytoplasm. It carries out the reaction L-rhamnopyranose = L-rhamnulose. The protein operates within carbohydrate degradation; L-rhamnose degradation; glycerone phosphate from L-rhamnose: step 1/3. Its function is as follows. Catalyzes the interconversion of L-rhamnose and L-rhamnulose. In Pectobacterium atrosepticum (strain SCRI 1043 / ATCC BAA-672) (Erwinia carotovora subsp. atroseptica), this protein is L-rhamnose isomerase.